The sequence spans 65 residues: Large ribosomal subunit protein bL35 (65 aa).

Belongs to the bacterial ribosomal protein bL35 family.

The polypeptide is Large ribosomal subunit protein bL35 (Baumannia cicadellinicola subsp. Homalodisca coagulata).